Reading from the N-terminus, the 510-residue chain is MSHLVLTPGTLTLAQIREISRGKVTLELAESAIADINTSAGLVQQVLDEGRTVYGINTGFGLLANTKIAADDLQLLQRSIVLSHAAGTGQYMQDATVRLMMVLKINSLSRGFSGIRLEVINFLIALVNAGVYPCVPEKGSVGASGDLAPLSHMCLPLLGEGEMSYQGQLISAAEGLEIAGLKPIELAAKEGLALLNGTQASTALALEGLFNAEDLFAASSVIGAMSVEAAMGSRSPFDPRIHAARGQKGQIDSAAVFRHLLGGESEISLDHVNCEKVQDPYSLRCQPQVLGACLTQIRHAAEVLGTEANGVTDNPLVFQDTGDIISGGNFHAEPVAMAADNLAIAIAELGSIAERRIALLIDSNLSKLPPFLVENGGVNSGFMIAQVTAAALASENKTYAHPASVDSLPTSANQEDHVSMATFAARRLRDMSENTRGVLAVELLAAAQGLDFRAPLQPSKAVAQAKGELRELVSYYDKDRFFGPDIEAATDLLLTASYNAYLPAEILPSL.

The segment at residues 143–145 (ASG) is a cross-link (5-imidazolinone (Ala-Gly)). S144 bears the 2,3-didehydroalanine (Ser) mark.

This sequence belongs to the PAL/histidase family. Post-translationally, contains an active site 4-methylidene-imidazol-5-one (MIO), which is formed autocatalytically by cyclization and dehydration of residues Ala-Ser-Gly.

The protein localises to the cytoplasm. The catalysed reaction is L-histidine = trans-urocanate + NH4(+). The protein operates within amino-acid degradation; L-histidine degradation into L-glutamate; N-formimidoyl-L-glutamate from L-histidine: step 1/3. In Shewanella pealeana (strain ATCC 700345 / ANG-SQ1), this protein is Histidine ammonia-lyase.